Reading from the N-terminus, the 550-residue chain is MIQLSPLLLLPLFSVFNSIADASTEYLRPQIHLTPDQGWMNDPNGMFYDRKDKLWHVYFQHNPDKKSIWATPVTWGHSTSKDLLTWDYHGNALEPENDDEGIFSGSVVVDRNNTSGFFNDSTDPEQRIVAIYTNNAQLQTQEIAYSLDKGYSFIKYDQNPVINVNSSQQRDPKVLWHDESNQWIMVVAKTQEFKVQIYGSPDLKKWDLKSNFTSNGYLGFQYECPGLFKLPIENPLNDTVTSKWVLLLAINPGSPLGGSINEYFIGDFDGTTFHPDDGATRFMDIGKDFYAFQSFDNTEPEDGALGLAWASNWQYANTVPTENWRSSMSLVRNYTLKYVDVNPENYGLTLIQKPVYDTKETRLNETLKTLETINEYEVNDLKLDKSSFVATDFNTERNATGVFEFDLKFTQTDLKMGYSNMTTQFGLYIHSQTVKGSQETLQLVFDTLSTTWYIDRTTQHSFQRNSPVFTERISTYVEKIDTTDQGNVYTLYGVVDRNILELYFNDGSIAMTNTFFFREGKIPTSFEVVCDSEKSFITIDELSVRELARK.

The signal sequence occupies residues 1 to 22; that stretch reads MIQLSPLLLLPLFSVFNSIADA. Substrate-binding positions include 39 to 42, Gln-60, and 103 to 104; these read WMND and FS. Asp-42 is a catalytic residue. N-linked (GlcNAc...) asparagine glycosylation is found at Asn-112, Asn-113, Asn-119, and Asn-165. A substrate-binding site is contributed by 170-171; it reads RD. N-linked (GlcNAc...) asparagine glycosylation is present at Asn-211. Glu-223 is a binding site for substrate. Asn-237 carries N-linked (GlcNAc...) asparagine glycosylation. Trp-313 contributes to the substrate binding site. Asn-333, Asn-364, Asn-398, and Asn-420 each carry an N-linked (GlcNAc...) asparagine glycan.

The protein belongs to the glycosyl hydrolase 32 family.

It catalyses the reaction Hydrolysis of terminal non-reducing beta-D-fructofuranoside residues in beta-D-fructofuranosides.. This Wickerhamomyces anomalus (Yeast) protein is Invertase (INV1).